The sequence spans 282 residues: NADPH-dependent 7-cyano-7-deazaguanine reductase (282 aa).

88-90 (IES) contributes to the substrate binding site. An NADPH-binding site is contributed by 90 to 91 (SK). The active-site Thioimide intermediate is Cys-190. Asp-197 serves as the catalytic Proton donor. 229-230 (HE) is a binding site for substrate. NADPH is bound at residue 258 to 259 (RG).

Belongs to the GTP cyclohydrolase I family. QueF type 2 subfamily. As to quaternary structure, homodimer.

Its subcellular location is the cytoplasm. It carries out the reaction 7-aminomethyl-7-carbaguanine + 2 NADP(+) = 7-cyano-7-deazaguanine + 2 NADPH + 3 H(+). It functions in the pathway tRNA modification; tRNA-queuosine biosynthesis. In terms of biological role, catalyzes the NADPH-dependent reduction of 7-cyano-7-deazaguanine (preQ0) to 7-aminomethyl-7-deazaguanine (preQ1). In Shigella dysenteriae serotype 1 (strain Sd197), this protein is NADPH-dependent 7-cyano-7-deazaguanine reductase.